We begin with the raw amino-acid sequence, 142 residues long: Putative pre-16S rRNA nuclease (142 aa).

The protein belongs to the YqgF nuclease family.

It is found in the cytoplasm. Could be a nuclease involved in processing of the 5'-end of pre-16S rRNA. This is Putative pre-16S rRNA nuclease from Azotobacter vinelandii (strain DJ / ATCC BAA-1303).